Here is a 255-residue protein sequence, read N- to C-terminus: 5'-nucleotidase SurE (255 aa).

Residues Asp11, Asp12, Ser43, and Asn99 each contribute to the a divalent metal cation site.

The protein belongs to the SurE nucleotidase family. The cofactor is a divalent metal cation.

The protein resides in the cytoplasm. It carries out the reaction a ribonucleoside 5'-phosphate + H2O = a ribonucleoside + phosphate. In terms of biological role, nucleotidase that shows phosphatase activity on nucleoside 5'-monophosphates. The polypeptide is 5'-nucleotidase SurE (Caldanaerobacter subterraneus subsp. tengcongensis (strain DSM 15242 / JCM 11007 / NBRC 100824 / MB4) (Thermoanaerobacter tengcongensis)).